The sequence spans 375 residues: Deoxyribonuclease-2 (375 aa).

The first 21 residues, 1 to 21 (MGLSPAAVLIFLLLGVSQTYA), serve as a signal peptide directing secretion. N-linked (GlcNAc...) asparagine glycosylation is present at Asn-131.

This sequence belongs to the DNase II family.

It catalyses the reaction Endonucleolytic cleavage to nucleoside 3'-phosphates and 3'-phosphooligonucleotide end-products.. Hydrolyzes DNA under acidic conditions with a preference for double-stranded DNA. Implicated in apoptosis. In Caenorhabditis elegans, this protein is Deoxyribonuclease-2 (nuc-1).